The sequence spans 941 residues: Endoplasmic reticulum aminopeptidase 1 (941 aa).

Met1 is a topological domain (cytoplasmic). Residues 2–21 (VFLPLKWSLATMSFLLSSLL) form a helical; Signal-anchor for type II membrane protein membrane-spanning segment. Over 22–941 (ALLTVSTPSW…WLQSEKLERM (920 aa)) the chain is Lumenal. N-linked (GlcNAc...) asparagine glycosylation is found at Asn70 and Asn154. Residues Glu183 and 317–321 (GAMEN) contribute to the substrate site. His353 contributes to the Zn(2+) binding site. The active-site Proton acceptor is Glu354. Residues His357 and Glu376 each contribute to the Zn(2+) site. 2 disulfides stabilise this stretch: Cys404–Cys443 and Cys736–Cys743. A glycan (N-linked (GlcNAc...) asparagine) is linked at Asn414. Asn760 and Asn901 each carry an N-linked (GlcNAc...) asparagine glycan.

It belongs to the peptidase M1 family. As to quaternary structure, monomer. May also exist as a heterodimer; with ERAP2. Interacts with RBMX. Requires Zn(2+) as cofactor. N-glycosylated. Ubiquitous.

The protein resides in the endoplasmic reticulum membrane. In terms of biological role, aminopeptidase that plays a central role in peptide trimming, a step required for the generation of most HLA class I-binding peptides. Peptide trimming is essential to customize longer precursor peptides to fit them to the correct length required for presentation on MHC class I molecules. Strongly prefers substrates 9-16 residues long. Rapidly degrades 13-mer to a 9-mer and then stops. Preferentially hydrolyzes the residue Leu and peptides with a hydrophobic C-terminus, while it has weak activity toward peptides with charged C-terminus. May play a role in the inactivation of peptide hormones. May be involved in the regulation of blood pressure through the inactivation of angiotensin II and/or the generation of bradykinin in the kidney. This Homo sapiens (Human) protein is Endoplasmic reticulum aminopeptidase 1 (ERAP1).